Here is an 860-residue protein sequence, read N- to C-terminus: MQEQYRPEEIESKVQLHWDEKRTFEVTEDESKEKYYCLSMLPYPSGRLHMGHVRNYTIGDVVARYQRMLGKNVLQPIGWDAFGLPAEGAAVKNNTAPAPWTYDNIAYMKNQLKTLGFGYDWSREIATCTPEYYRWEQKFFTELYKKGLVYKKTSAVNWCPNDQTVLANEQVIDGCCWRCDTKVERKEIPQWFIKITAYADELLRDLDKLDHWPDTVKTMQRNWIGRSEGVEITFDVKGYDNTLTVYTTRPDTFMGATYLAVAAGHPLAQKAAANNAELAAFIDECRNTKVAEAEMATMEKKGVDTGFKATHPLTGEEIPVWAANFVLMEYGTGAVMAVPGHDQRDYEFASKYGLTIKPVILAADGSEPDLSEQALTEKGVLFNSGEFDGLAFEAAFNAIADKLAEKGVGERKVNYRLRDWGVSRQRYWGAPIPMVTLEDGTVLPTPEDQLPVILPEDVVMDGITSPIKADPEWAKTTVNGMPALRETDTFDTFMESSWYYARYTCPQYQEGMLDSKAANYWLPVDIYIGGIEHAIMHLLYFRFFHKLMRDAGMVTSDEPAKQLLCQGMVLADAFYYVGENGERNWVSPVDAIVERDEKGRIVKAKDAAGHELVYTGMSKMSKSKNNGIDPQVMVERYGADTVRLFMMFASPADMTLEWQESGVEGANRFIKRVWKLVYEHTAKGPVAALNVDALSEDQKALRRDVHKTIAKVTDDIGRRQTFNTAIAAIMELMNKLAKAPQEGEQDRALLQEALQAVVRMLNPFTPHVCFTLWQELGGEGDIDNAPWPVADEQAMVENTTLVVVQVNGKVRGKITVAVDATEEQVRERAGQEHLVAKYLDGVTVRKVIYVPGKLLNLVVG.

The 'HIGH' region signature appears at 42–52; the sequence is PYPSGRLHMGH. A 'KMSKS' region motif is present at residues 619–623; that stretch reads KMSKS. Residue Lys622 participates in ATP binding.

It belongs to the class-I aminoacyl-tRNA synthetase family.

The protein localises to the cytoplasm. It carries out the reaction tRNA(Leu) + L-leucine + ATP = L-leucyl-tRNA(Leu) + AMP + diphosphate. The polypeptide is Leucine--tRNA ligase (Salmonella enteritidis PT4 (strain P125109)).